Consider the following 80-residue polypeptide: Small ribosomal subunit protein uS17c (80 aa).

The protein belongs to the universal ribosomal protein uS17 family. Part of the 30S ribosomal subunit.

Its subcellular location is the plastid. It localises to the chloroplast. Functionally, one of the primary rRNA binding proteins, it binds specifically to the 5'-end of 16S ribosomal RNA. In Gracilaria tenuistipitata var. liui (Red alga), this protein is Small ribosomal subunit protein uS17c (rps17).